Here is a 102-residue protein sequence, read N- to C-terminus: Hemoglobin subunit beta-Z (102 aa).

Positions 1-102 constitute a Globin domain; that stretch reads FGNLSSAQAI…VANALSHKYH (102 aa). Heme b contacts are provided by histidine 19 and histidine 48.

It belongs to the globin family. In terms of assembly, heterotetramer of two alpha chains and two beta chains.

Functionally, this is an embryonic beta chain. The polypeptide is Hemoglobin subunit beta-Z (HBBZ) (Mesocricetus auratus (Golden hamster)).